The chain runs to 319 residues: MKNKELNLHTLYTQHNRESWSGFGGHLSIAVSEEEAKAVEGLNDYLSVEEVETIYIPLVRLLHLHVKSAAERNKHVNVFLKHPHSAKIPFIIGIAGSVAVGKSTTARILQKLLSRLPDRPKVSLITTDGFLFPTAELKKKNMMSRKGFPESYDVKALLEFLNDLKSGKDSVKAPVYSHLTYDREEGVFEVVEQADIVIIEGINVLQSPTLEDDRENPRIFVSDFFDFSIYVDAEESRIFTWYLERFRLLRETAFQNPDSYFHKFKDLSDQEADEMAASIWESVNRPNLYENILPTKFRSDLILRKGDGHKVEEVLVRRV.

96 to 103 provides a ligand contact to ATP; the sequence is GSVAVGKS.

It belongs to the prokaryotic pantothenate kinase family.

It localises to the cytoplasm. It catalyses the reaction (R)-pantothenate + ATP = (R)-4'-phosphopantothenate + ADP + H(+). It participates in cofactor biosynthesis; coenzyme A biosynthesis; CoA from (R)-pantothenate: step 1/5. This chain is Pantothenate kinase (coaA), found in Bacillus subtilis (strain 168).